A 321-amino-acid chain; its full sequence is Biotin synthase (321 aa).

A Radical SAM core domain is found at 45-274 (FHGNRVDLCS…GALIRLCGGR (230 aa)). C63, C67, and C70 together coordinate [4Fe-4S] cluster. Positions 139, 199, and 269 each coordinate [2Fe-2S] cluster.

This sequence belongs to the radical SAM superfamily. Biotin synthase family. In terms of assembly, homodimer. [4Fe-4S] cluster is required as a cofactor. [2Fe-2S] cluster serves as cofactor.

It carries out the reaction (4R,5S)-dethiobiotin + (sulfur carrier)-SH + 2 reduced [2Fe-2S]-[ferredoxin] + 2 S-adenosyl-L-methionine = (sulfur carrier)-H + biotin + 2 5'-deoxyadenosine + 2 L-methionine + 2 oxidized [2Fe-2S]-[ferredoxin]. Its pathway is cofactor biosynthesis; biotin biosynthesis; biotin from 7,8-diaminononanoate: step 2/2. Catalyzes the conversion of dethiobiotin (DTB) to biotin by the insertion of a sulfur atom into dethiobiotin via a radical-based mechanism. This Pelotomaculum thermopropionicum (strain DSM 13744 / JCM 10971 / SI) protein is Biotin synthase.